A 384-amino-acid polypeptide reads, in one-letter code: MGSLCSRNKHYSQADDEENTQTAEIERRIEQETKADKHIQKLLLLGAGDSGKSTIFKQIKLLFQTGFDEAELKNYIPVIHANVYQTIKILHDGSKELAQNELEASKYLLSAENKEIGEKLSEIGGRLDYPRLTKDLVQDIEALWKDPAIQETLLRGNELQVPDCAHYFMENLERFSDIHYIPTKEDVLFARIRTTGVVEIQFSPVGENKKSGEVYRLFDVGGQRNERRKWIHLFEGVTAVIFCAAISEYDQTLFEDERKNRMMETKELFEWVLKQPCFEKTSFMLFLNKFDIFEQKVLKVPLNTCEWFKDYQSVSTGKQEIEHAYEFVKKKFEESYFQCTAPDRVDRVFKIYRTTALDQKLVKKTFKLVDETLRRRNLFEAGLL.

The disordered stretch occupies residues 1–22 (MGSLCSRNKHYSQADDEENTQT). The N-myristoyl glycine moiety is linked to residue G2. Residue C5 is the site of S-palmitoyl cysteine attachment. The region spanning 38-384 (HIQKLLLLGA…RRNLFEAGLL (347 aa)) is the G-alpha domain. The segment at 41 to 54 (KLLLLGAGDSGKST) is G1 motif. GTP is bound by residues D49, S50, G51, K52, S53, T54, D163, L188, T194, G222, N288, K289, D291, and A356. S53 lines the Mg(2+) pocket. The interval 186-194 (DVLFARIRT) is G2 motif. T194 is a Mg(2+) binding site. Residues 215-224 (YRLFDVGGQR) form a G3 motif region. Residues 284–291 (MLFLNKFD) form a G4 motif region. The segment at 354-359 (TTALDQ) is G5 motif.

Belongs to the G-alpha family. As to quaternary structure, g proteins are composed of 3 units; alpha, beta and gamma. The alpha chain contains the guanine nucleotide binding site. The cofactor is Mg(2+).

In terms of biological role, guanine nucleotide-binding proteins (G proteins) are involved as modulators or transducers in various transmembrane signaling systems. In Solanum tuberosum (Potato), this protein is Guanine nucleotide-binding protein alpha-1 subunit (GPA1).